The primary structure comprises 134 residues: Small ribosomal subunit protein uS8c (134 aa).

The protein belongs to the universal ribosomal protein uS8 family. In terms of assembly, part of the 30S ribosomal subunit.

The protein localises to the plastid. It is found in the chloroplast. In terms of biological role, one of the primary rRNA binding proteins, it binds directly to 16S rRNA central domain where it helps coordinate assembly of the platform of the 30S subunit. The polypeptide is Small ribosomal subunit protein uS8c (rps8) (Daucus carota (Wild carrot)).